Consider the following 270-residue polypeptide: Tetraspanin-18 (270 aa).

Over 1–15 (MRRNCCHVSFASTLK) the chain is Cytoplasmic. The chain crosses the membrane as a helical span at residues 16–36 (ILNFVQAFIGVSIIIYSIWML). Over 37 to 99 (HEYSRHLPVD…LRSLDLPAPW (63 aa)) the chain is Extracellular. The helical transmembrane segment at 100 to 120 (FIYSFMAVGILVCIVTFIGFI) threads the bilayer. At 121 to 132 (AAEAINGCCLCF) the chain is on the cytoplasmic side. A helical transmembrane segment spans residues 133–153 (YSILKTLLILLEAALVAYIAI). The Extracellular segment spans residues 154-183 (DRHWEKDLPYDPTGELSSLRAFIEENIDIC). Residues 184–204 (KWVGIAVVAVQLLSLLLAMVL) traverse the membrane as a helical segment. Residues 205 to 270 (RAMVSTPKPE…NQSPPVNPKG (66 aa)) lie on the Cytoplasmic side of the membrane. The disordered stretch occupies residues 212 to 249 (KPELDEEEDDENPRSRTWDPLLGPQGNQAPAGSSKIEN). Polar residues predominate over residues 236–249 (QGNQAPAGSSKIEN). Residue Ser245 is modified to Phosphoserine.

Belongs to the tetraspanin (TM4SF) family. Homodimer. Constituent of tobamovirus replication complex. As to expression, expressed in rosette leaves.

It localises to the membrane. The protein resides in the vacuole membrane. Functionally, may be involved in the regulation of cell differentiation. Its function is as follows. Promotes intracellular multiplication of tobamoviruses, probably being a component of the replication complex. This chain is Tetraspanin-18 (TOM2AH2), found in Arabidopsis thaliana (Mouse-ear cress).